Here is a 502-residue protein sequence, read N- to C-terminus: Cobyric acid synthase (502 aa).

Residues 260–433 (ILRVAVCAIP…WHGSLESDGF (174 aa)) enclose the GATase cobBQ-type domain. The active-site Nucleophile is cysteine 341. Histidine 425 is a catalytic residue.

It belongs to the CobB/CobQ family. CobQ subfamily.

The protein operates within cofactor biosynthesis; adenosylcobalamin biosynthesis. Its function is as follows. Catalyzes amidations at positions B, D, E, and G on adenosylcobyrinic A,C-diamide. NH(2) groups are provided by glutamine, and one molecule of ATP is hydrogenolyzed for each amidation. This is Cobyric acid synthase from Streptomyces avermitilis (strain ATCC 31267 / DSM 46492 / JCM 5070 / NBRC 14893 / NCIMB 12804 / NRRL 8165 / MA-4680).